We begin with the raw amino-acid sequence, 382 residues long: MFYEKIQTPAYILEEDKLRKNCELLASVGEKSGAKVLLALKGFAFSGAMKIVGEYLKGCTCSGLWEAKFAKEYMDKEIHTYSPAFKEDEIGEIASLSHHIVFNSLAQFHKFQSKTQKNSLGLRCNVEFSLAPKELYNPCGRYSRLGIRAKDFENVDLNAIEGLHFHALCEESADALEAVLKVFKEKFGKWIGQMKWVNFGGGHHITKKGYDVEKLIALCKNFSDKYGVQVYLEPGEAVGWQTGNLVASVVDIIENEKQIAILDTSSEAHMPDTIIMPYTSEVLNARILATRENEKISDLKENEFAYLLTGNTCLAGDVMGEYAFDKKLKIGDKIVFLDQIHYTIVKNTTFNGIRLPNLMLLDHKNELQMIREFSYKDYSLRN.

Lys-41 is modified (N6-(pyridoxal phosphate)lysine). Substrate contacts are provided by Glu-236 and Asp-272.

The protein belongs to the Orn/Lys/Arg decarboxylase class-II family. NspC subfamily. As to quaternary structure, homodimer. Requires pyridoxal 5'-phosphate as cofactor.

The protein resides in the cytoplasm. The enzyme catalyses carboxynorspermidine + H(+) = norspermidine + CO2. It catalyses the reaction carboxyspermidine + H(+) = spermidine + CO2. In terms of biological role, catalyzes the decarboxylation of carboxynorspermidine and carboxyspermidine in vitro. In vivo, responsible for synthesizing spermidine, but not sym-norspermidine. The polypeptide is Carboxynorspermidine/carboxyspermidine decarboxylase (Campylobacter jejuni subsp. jejuni serotype O:6 (strain 81116 / NCTC 11828)).